A 160-amino-acid chain; its full sequence is Type IV major fimbrial protein FimA (160 aa).

Positions 1-7 (MKSLQKG) are cleaved as a propeptide — leader sequence. Phe-8 carries the N-methylphenylalanine modification. The helical transmembrane segment at 8 to 28 (FTLIELMIVVAIIGILAAFAI) threads the bilayer. Cys-63 and Cys-105 are disulfide-bonded.

The protein belongs to the N-Me-Phe pilin family. As to quaternary structure, the pili are polar flexible filaments of about 5.4 nanometers diameter and 2.5 micrometers average length; they consist of only a single polypeptide chain arranged in a helical configuration of five subunits per turn in the assembled pilus.

The protein resides in the fimbrium. The protein localises to the membrane. In terms of biological role, major component of the type IV fimbriae that plays an essential role in twitching motility, natural transformation, and protease secretion. This Dichelobacter nodosus (Bacteroides nodosus) protein is Type IV major fimbrial protein FimA (fimA).